We begin with the raw amino-acid sequence, 400 residues long: Phosphoglycerate kinase (400 aa).

Residues 23-25 (DLN), Arg-38, 61-64 (HFGR), Arg-120, and Arg-153 each bind substrate. ATP is bound by residues Lys-203, Glu-325, and 355-358 (GGDT).

Belongs to the phosphoglycerate kinase family. Monomer.

It is found in the cytoplasm. It carries out the reaction (2R)-3-phosphoglycerate + ATP = (2R)-3-phospho-glyceroyl phosphate + ADP. It functions in the pathway carbohydrate degradation; glycolysis; pyruvate from D-glyceraldehyde 3-phosphate: step 2/5. In Methylorubrum populi (strain ATCC BAA-705 / NCIMB 13946 / BJ001) (Methylobacterium populi), this protein is Phosphoglycerate kinase.